The following is a 72-amino-acid chain: Large ribosomal subunit protein bL31 (72 aa).

Zn(2+)-binding residues include Cys16, Cys18, Cys36, and Cys39.

The protein belongs to the bacterial ribosomal protein bL31 family. Type A subfamily. As to quaternary structure, part of the 50S ribosomal subunit. The cofactor is Zn(2+).

Functionally, binds the 23S rRNA. The protein is Large ribosomal subunit protein bL31 of Geobacter sp. (strain M21).